Consider the following 142-residue polypeptide: Large ribosomal subunit protein uL11 (142 aa).

It belongs to the universal ribosomal protein uL11 family. In terms of assembly, part of the ribosomal stalk of the 50S ribosomal subunit. Interacts with L10 and the large rRNA to form the base of the stalk. L10 forms an elongated spine to which L12 dimers bind in a sequential fashion forming a multimeric L10(L12)X complex. Post-translationally, one or more lysine residues are methylated.

In terms of biological role, forms part of the ribosomal stalk which helps the ribosome interact with GTP-bound translation factors. This is Large ribosomal subunit protein uL11 from Vibrio vulnificus (strain YJ016).